The following is a 325-amino-acid chain: Glutarate 2-hydroxylase (325 aa).

3 residues coordinate Fe cation: His-160, Asp-162, and His-292.

The protein belongs to the glutarate hydroxylase family. As to quaternary structure, homotetramer. Fe(2+) is required as a cofactor.

It carries out the reaction glutarate + 2-oxoglutarate + O2 = (S)-2-hydroxyglutarate + succinate + CO2. Its pathway is amino-acid degradation. In terms of biological role, acts as an alpha-ketoglutarate-dependent dioxygenase catalyzing hydroxylation of glutarate (GA) to L-2-hydroxyglutarate (L2HG). Functions in a L-lysine degradation pathway that proceeds via cadaverine, glutarate and L-2-hydroxyglutarate. This Escherichia coli (strain K12 / MC4100 / BW2952) protein is Glutarate 2-hydroxylase.